Here is a 205-residue protein sequence, read N- to C-terminus: uncharacterized protein (205 aa).

This is an uncharacterized protein from Sinorhizobium fredii (strain NBRC 101917 / NGR234).